The following is an 876-amino-acid chain: Serrate RNA effector molecule homolog (876 aa).

The tract at residues 1–90 (MGDSDDEYDR…RRDWDEHSSD (90 aa)) is disordered. Residue G2 is modified to N-acetylglycine. S4 is modified (phosphoserine). Phosphotyrosine is present on Y8. The segment covering 8–73 (YDRRRRDKFR…ERFSPPRHEL (66 aa)) has biased composition (basic and acidic residues). 3 positions are modified to phosphoserine: S67, S74, and S136. Residue K150 forms a Glycyl lysine isopeptide (Lys-Gly) (interchain with G-Cter in SUMO2) linkage. The interval 272–413 (EEEEQAGKPG…PKDAPGLECK (142 aa)) is disordered. Residues 297 to 347 (DGERKANEKDDKKEDGKQAENESSSDDKIKKSEGDGDKEEKKEDSEKEAKK) are compositionally biased toward basic and acidic residues. Positions 370–387 (SESESESGQAEEEKEEAD) are enriched in acidic residues. The segment covering 388 to 413 (ETLKEKEKPKEEEREKPKDAPGLECK) has biased composition (basic and acidic residues). S493 is modified (phosphoserine). Phosphothreonine is present on T544. Position 570 is a phosphoserine (S570). The segment at 575 to 597 (ELLGSSGGAPPEEPPKEGNPAEI) is disordered. A Phosphothreonine modification is found at T671. S679 bears the Phosphoserine mark. Omega-N-methylarginine occurs at positions 833, 840, and 850. The segment at 835 to 854 (NYDAFRGQGGYPGKPRNRMV) is disordered.

It belongs to the ARS2 family. Interacts with CASP8AP2, ERBB4, NCBP1/CBP80 and DROSHA. Interacts with LUZP4. Interacts with NCBP2/CBP20 and NCBP3. Interacts with MTREX.

It localises to the nucleus. The protein resides in the nucleoplasm. Its subcellular location is the cytoplasm. Acts as a mediator between the cap-binding complex (CBC) and the primary microRNAs (miRNAs) processing machinery during cell proliferation. Contributes to the stability and delivery of capped primary miRNA transcripts to the primary miRNA processing complex containing DGCR8 and DROSHA, thereby playing a role in RNA-mediated gene silencing (RNAi) by miRNAs. Binds capped RNAs (m7GpppG-capped RNA); however interaction is probably mediated via its interaction with NCBP1/CBP80 component of the CBC complex. Involved in cell cycle progression at S phase. Does not directly confer arsenite resistance but rather modulates arsenic sensitivity. Independently of its activity on miRNAs, necessary and sufficient to promote neural stem cell self-renewal. Does so by directly binding SOX2 promoter and positively regulating its transcription. The polypeptide is Serrate RNA effector molecule homolog (SRRT) (Bos taurus (Bovine)).